The sequence spans 462 residues: Sensor histidine kinase RegB (462 aa).

Over 1–25 the chain is Cytoplasmic; sequence MILGPDGILNRDTRGDWWRLRTLIL. A helical membrane pass occupies residues 26–45; that stretch reads LRWMAVAGQLAAIVVTDWYL. Topologically, residues 46-51 are extracellular; it reads GVRLPM. A helical membrane pass occupies residues 52–70; the sequence is GLCFMAVGASVIANVIATF. The Cytoplasmic portion of the chain corresponds to 71–78; it reads VFPQNRRL. Residues 79–96 form a helical membrane-spanning segment; that stretch reads TEFQALMILLFDLTQLSF. The Extracellular portion of the chain corresponds to 97-103; that stretch reads LLFLTGG. The chain crosses the membrane as a helical span at residues 104-123; it reads LTNPFALLILAPVTISGVAL. Residues 124–129 lie on the Cytoplasmic side of the membrane; that stretch reads DVRTTV. A helical membrane pass occupies residues 130 to 149; that stretch reads ILGAIAIGLLTFTAYFHLPL. The Extracellular portion of the chain corresponds to 150–164; that stretch reads ILADGSSLSVPRMFE. The chain crosses the membrane as a helical span at residues 165–182; the sequence is FGFWLAIVIGILFLGLYS. At 183-462 the chain is on the cytoplasmic side; it reads RRVAIEIRSM…PLGENVLIQT (280 aa). In terms of domain architecture, Histidine kinase spans 218-445; that stretch reads AAAHELGTPL…IVEVIWPVDR (228 aa). Histidine 221 is subject to Phosphohistidine; by autocatalysis.

The protein resides in the cell inner membrane. It carries out the reaction ATP + protein L-histidine = ADP + protein N-phospho-L-histidine.. Its function is as follows. Member of the two-component regulatory system RegB/RegA. Involved in the positive regulation of photosynthesis gene expression in response to anaerobiosis. Also involved in positive regulation of the cbbI and cbbII Calvin cycle CO2 fixation operons, as well as in regulation of expression of genes involved in alternative CO2 fixation pathways. Phosphorylates RegA/PrrA. The protein is Sensor histidine kinase RegB (regB) of Cereibacter sphaeroides (Rhodobacter sphaeroides).